Consider the following 187-residue polypeptide: MMLLDLEEKTRVLVEDIVERSAIGSGSIFVLGLSSSEVVGGIIGKASSREIGQRIVKTILEVLEPKGIYLAVQGCEHLNRALVVERELALAKDLEIVNVLPTLHAGGSGQLAAFDYMEDPVEVEEILAQAGIDIGDTSIGMHVKRVQVPLRPIISELGGAHVTALASRPKLIGGARAEYLADPIRKN.

Belongs to the UPF0340 family.

This is UPF0340 protein stu1894 from Streptococcus thermophilus (strain ATCC BAA-250 / LMG 18311).